We begin with the raw amino-acid sequence, 282 residues long: Putative 4-diphosphocytidyl-2-C-methyl-D-erythritol kinase (282 aa).

The active site involves K10. An ATP-binding site is contributed by 94 to 104; sequence PICAGLGGGSS. D136 is an active-site residue.

It belongs to the GHMP kinase family. IspE subfamily.

It carries out the reaction 4-CDP-2-C-methyl-D-erythritol + ATP = 4-CDP-2-C-methyl-D-erythritol 2-phosphate + ADP + H(+). Its function is as follows. Catalyzes the phosphorylation of the position 2 hydroxy group of 4-diphosphocytidyl-2C-methyl-D-erythritol. In Streptococcus mutans serotype c (strain ATCC 700610 / UA159), this protein is Putative 4-diphosphocytidyl-2-C-methyl-D-erythritol kinase (ipk).